We begin with the raw amino-acid sequence, 188 residues long: uncharacterized protein (188 aa).

Its subcellular location is the plastid. The protein resides in the cyanelle. This is an uncharacterized protein from Cyanophora paradoxa.